The sequence spans 443 residues: Chromosome partition protein MukF (443 aa).

Residues 209 to 237 (LDETSGNLRELQDTLNAAGDKLQAQLLRI) are leucine-zipper.

This sequence belongs to the MukF family. Interacts, and probably forms a ternary complex, with MukE and MukB via its C-terminal region. The complex formation is stimulated by calcium or magnesium. It is required for an interaction between MukE and MukB.

It is found in the cytoplasm. It localises to the nucleoid. Functionally, involved in chromosome condensation, segregation and cell cycle progression. May participate in facilitating chromosome segregation by condensation DNA from both sides of a centrally located replisome during cell division. Not required for mini-F plasmid partitioning. Probably acts via its interaction with MukB and MukE. Overexpression results in anucleate cells. It has a calcium binding activity. The polypeptide is Chromosome partition protein MukF (Actinobacillus pleuropneumoniae serotype 3 (strain JL03)).